The sequence spans 700 residues: Non-hemolytic phospholipase C (700 aa).

Positions 1–34 (MTNQNRRDFLRLAAGTAGAAALQLFPPVIREALA) form a signal peptide, tat-type signal.

It belongs to the bacterial phospholipase C family. Predicted to be exported by the Tat system. The position of the signal peptide cleavage has not been experimentally proven.

It carries out the reaction a 1,2-diacyl-sn-glycero-3-phosphocholine + H2O = phosphocholine + a 1,2-diacyl-sn-glycerol + H(+). Hydrolyzes phosphatidylserine as well as phosphatidylcholine. This Burkholderia pseudomallei (strain K96243) protein is Non-hemolytic phospholipase C (plcN).